Reading from the N-terminus, the 316-residue chain is Arginase-1 (316 aa).

The segment at 1–26 (MAKERHSVGVIGAPFSKGQPRRGVEE) is disordered. Residues His-101, Asp-124, His-126, and Asp-128 each contribute to the Mn(2+) site. Substrate is bound by residues 126 to 130 (HADIN), 137 to 139 (CGN), and Asp-183. Residues Asp-232 and Asp-234 each coordinate Mn(2+). Residue Thr-246 coordinates substrate.

Belongs to the arginase family. Homotrimer. Mn(2+) serves as cofactor. As to expression, strongest expression in liver.

It catalyses the reaction L-arginine + H2O = urea + L-ornithine. It participates in nitrogen metabolism; urea cycle; L-ornithine and urea from L-arginine: step 1/1. This chain is Arginase-1 (arg1), found in Xenopus laevis (African clawed frog).